A 214-amino-acid polypeptide reads, in one-letter code: MVKSNLQTILNSHCFVREKESNIPKMPVIELTRNKPESESSHRCSNPCPGPLWCSDVPLPPLKIPGGRGNDQRDHSLSAKLFYSDAQLLVLEEAPQSNSRVRFLLFERRCSVSKHLVWRGALKGTNLYIEIPTGVLPEGSKDSFSLLLEFAEEKLQVDHVFICFHKSRDDRASLLRTFSFMGFEIVRPGHPLVPTRPDAFFMAYRIERDSDGDE.

The protein belongs to the ODC antizyme family. As to quaternary structure, interacts with ODC1 and thereby sterically blocks ODC homodimerization.

Functionally, ornithine decarboxylase (ODC) antizyme protein that negatively regulates ODC activity and intracellular polyamine biosynthesis and uptake in response to increased intracellular polyamine levels. Binds to ODC monomers, inhibiting the assembly of the functional ODC homodimer, and targets the monomers for ubiquitin-independent proteolytic destruction by the 26S proteasome. This chain is Ornithine decarboxylase antizyme 1 (oaz1a), found in Danio rerio (Zebrafish).